Reading from the N-terminus, the 509-residue chain is MLFTIALVGVVLGLAYSLHIKIFSYWKRKGVPHETPLPIVGNMRGIVKKYHFRDINQRIYKKFKGQGPIAGMYMFFKRTALITDLDFIKQVMIKDFSYFQDRGAFTNPRDDPLTGHLFALEGEEWRAMRHKLTPVFTSGKIKQMSKVIVDVGLRLGDAMDKAVKEAKVEEGNVEIKDLCARFTTDVIGSCAFGLECNSLQDPSAEFRQKGREIFTRRRHSTLVQSFIFTNARLARKLRIKVLPDDLTQFFMSTVKNTVDYRLKNGIKRNDFIEQMIELRAEDQEAAKKGQGIDLSHGLTLEQMAAQAFVFFVAGFETSSSTMSLCLYELALQPDIQQRLREEIESVLANVDGGELNYDVLAQMTYLDQVLSETLRKHPLLPHLIRETTKDYQIPNSDIVLDKGILALIPVHNIHHDPEIYPEPEKFDPSRFDPEEVKNRHPMAYLPFGDGPRNCIGLRFGKIQAKIGLVSLLRRFKFSVSNRTDVPLIFSKKSFLLTTNDGIYLKVERV.

Cysteine 454 serves as a coordination point for heme.

Belongs to the cytochrome P450 family. It depends on heme as a cofactor.

It is found in the endoplasmic reticulum membrane. The protein resides in the microsome membrane. May be involved in the metabolism of insect hormones and in the breakdown of synthetic insecticides. This chain is Probable cytochrome P450 6a14 (Cyp6a14), found in Drosophila melanogaster (Fruit fly).